Reading from the N-terminus, the 346-residue chain is Melatonin receptor type 1C (346 aa).

At 1–26 the chain is on the extracellular side; sequence MERPGSNGSCSGCRLEGGPAARAASG. An N-linked (GlcNAc...) asparagine glycan is attached at Asn-7. The helical transmembrane segment at 27 to 47 threads the bilayer; it reads LAAVLIVTIVVDVLGNALVIL. Residues 48-60 lie on the Cytoplasmic side of the membrane; the sequence is SVLRNKKLRNAGN. A helical transmembrane segment spans residues 61-81; it reads IFVVSLSVADLVVAVYPYPLI. Residues 82 to 99 lie on the Extracellular side of the membrane; the sequence is LSAIFHNGWTMGNIHCQI. Cys-97 and Cys-174 are disulfide-bonded. A helical membrane pass occupies residues 100–120; sequence SGFLMGLSVIGSIFNITAIAI. Residues 121–139 are Cytoplasmic-facing; the sequence is NRYCYICHSLRYDKLFNLK. The chain crosses the membrane as a helical span at residues 140 to 160; it reads NTCCYICLTWTLTVVAIVPNF. Topologically, residues 161 to 184 are extracellular; sequence FVGSLQYDPRIYSCTFAQTVSTSY. Residues 185–205 form a helical membrane-spanning segment; the sequence is TITVVVVHFIVPLSIVTFCYL. The Cytoplasmic segment spans residues 206-237; the sequence is RIWILVIQVKHRVRQDCKQKIRAADIRNFLTM. Residues 238–258 form a helical membrane-spanning segment; sequence FVVFVLFAVCWGPLNFIGLAV. Over 259 to 271 the chain is Extracellular; sequence SINPSKVQPHIPE. A helical transmembrane segment spans residues 272 to 292; the sequence is WLFVLSYFMAYFNSCLNAVIY. At 293–346 the chain is on the cytoplasmic side; it reads GLLNQNFRKEYKRILLMLRTPRLLFIDVSKGGTEGLKSKPSPAVTNNNQAEIHL. The segment at 326 to 346 is disordered; that stretch reads EGLKSKPSPAVTNNNQAEIHL. Over residues 335 to 346 the composition is skewed to polar residues; the sequence is AVTNNNQAEIHL.

The protein belongs to the G-protein coupled receptor 1 family. In terms of tissue distribution, expressed in optic tectum, neostriatum, hypothalamus, thalamus and pineal gland, less in cerebellum and retina.

It is found in the cell membrane. In terms of biological role, high affinity receptor for melatonin. The activity of this receptor is mediated by pertussis toxin sensitive G proteins that inhibits adenylate cyclase activity. This is Melatonin receptor type 1C from Gallus gallus (Chicken).